The sequence spans 641 residues: SUMO-activating enzyme subunit 2-B (641 aa).

Residues Gly24–Gly29, Asp48, Asn56–Arg59, Lys72, Ser95–Ile96, and Asp117–Arg122 each bind ATP. Positions 158 and 161 each coordinate Zn(2+). Cys173 (glycyl thioester intermediate) is an active-site residue. Zn(2+) contacts are provided by Cys439 and Cys442. Residues Gly546–Asp641 form a disordered region. A compositionally biased stretch (basic and acidic residues) spans Val548–Val561. The span at Lys562–Ala579 shows a compositional bias: polar residues. Composition is skewed to acidic residues over residues Gln582–Ser594 and Pro630–Asp641.

It belongs to the ubiquitin-activating E1 family. Heterodimer of sae1 and uba2/sae2. The heterodimer corresponds to the two domains that are encoded on a single polypeptide chain in ubiquitin-activating enzyme E1. Interacts with ube2i.

It is found in the nucleus. Its pathway is protein modification; protein sumoylation. The heterodimer acts as an E1 ligase for sumo1, sumo2, and sumo3. It mediates ATP-dependent activation of sumo proteins followed by formation of a thioester bond between a sumo protein and a conserved active site cysteine residue on uba2/sae2. The protein is SUMO-activating enzyme subunit 2-B (uba2-b) of Xenopus laevis (African clawed frog).